We begin with the raw amino-acid sequence, 410 residues long: Serine hydroxymethyltransferase (410 aa).

(6S)-5,6,7,8-tetrahydrofolate-binding positions include Leu119 and Gly123–Leu125. Position 228 is an N6-(pyridoxal phosphate)lysine (Lys228). Residue Ser351–Phe353 coordinates (6S)-5,6,7,8-tetrahydrofolate.

Belongs to the SHMT family. In terms of assembly, homodimer. Pyridoxal 5'-phosphate is required as a cofactor.

It is found in the cytoplasm. It carries out the reaction (6R)-5,10-methylene-5,6,7,8-tetrahydrofolate + glycine + H2O = (6S)-5,6,7,8-tetrahydrofolate + L-serine. It functions in the pathway one-carbon metabolism; tetrahydrofolate interconversion. Its pathway is amino-acid biosynthesis; glycine biosynthesis; glycine from L-serine: step 1/1. In terms of biological role, catalyzes the reversible interconversion of serine and glycine with tetrahydrofolate (THF) serving as the one-carbon carrier. This reaction serves as the major source of one-carbon groups required for the biosynthesis of purines, thymidylate, methionine, and other important biomolecules. Also exhibits THF-independent aldolase activity toward beta-hydroxyamino acids, producing glycine and aldehydes, via a retro-aldol mechanism. The protein is Serine hydroxymethyltransferase of Clostridium perfringens (strain 13 / Type A).